A 130-amino-acid polypeptide reads, in one-letter code: Large ribosomal subunit protein bL17 (130 aa).

It belongs to the bacterial ribosomal protein bL17 family. Part of the 50S ribosomal subunit. Contacts protein L32.

In Paraburkholderia xenovorans (strain LB400), this protein is Large ribosomal subunit protein bL17.